Consider the following 285-residue polypeptide: 2-dehydro-3-deoxyphosphooctonate aldolase (285 aa).

The protein belongs to the KdsA family.

The protein localises to the cytoplasm. The enzyme catalyses D-arabinose 5-phosphate + phosphoenolpyruvate + H2O = 3-deoxy-alpha-D-manno-2-octulosonate-8-phosphate + phosphate. The protein operates within carbohydrate biosynthesis; 3-deoxy-D-manno-octulosonate biosynthesis; 3-deoxy-D-manno-octulosonate from D-ribulose 5-phosphate: step 2/3. It functions in the pathway bacterial outer membrane biogenesis; lipopolysaccharide biosynthesis. In Acinetobacter baumannii (strain SDF), this protein is 2-dehydro-3-deoxyphosphooctonate aldolase.